We begin with the raw amino-acid sequence, 109 residues long: Ribonuclease P protein component (109 aa).

Belongs to the RnpA family. As to quaternary structure, consists of a catalytic RNA component (M1 or rnpB) and a protein subunit.

It catalyses the reaction Endonucleolytic cleavage of RNA, removing 5'-extranucleotides from tRNA precursor.. Functionally, RNaseP catalyzes the removal of the 5'-leader sequence from pre-tRNA to produce the mature 5'-terminus. It can also cleave other RNA substrates such as 4.5S RNA. The protein component plays an auxiliary but essential role in vivo by binding to the 5'-leader sequence and broadening the substrate specificity of the ribozyme. The chain is Ribonuclease P protein component from Streptococcus agalactiae serotype III (strain NEM316).